The following is a 228-amino-acid chain: Lipoprotein-releasing system ATP-binding protein LolD (228 aa).

Residues Leu6 to Val227 enclose the ABC transporter domain. Gly42–Ser49 serves as a coordination point for ATP.

It belongs to the ABC transporter superfamily. Lipoprotein translocase (TC 3.A.1.125) family. In terms of assembly, the complex is composed of two ATP-binding proteins (LolD) and two transmembrane proteins (LolC and LolE).

The protein resides in the cell inner membrane. Functionally, part of the ABC transporter complex LolCDE involved in the translocation of mature outer membrane-directed lipoproteins, from the inner membrane to the periplasmic chaperone, LolA. Responsible for the formation of the LolA-lipoprotein complex in an ATP-dependent manner. The sequence is that of Lipoprotein-releasing system ATP-binding protein LolD from Hyphomonas neptunium (strain ATCC 15444).